We begin with the raw amino-acid sequence, 308 residues long: Aspartate carbamoyltransferase catalytic subunit (308 aa).

2 residues coordinate carbamoyl phosphate: arginine 59 and threonine 60. Position 87 (lysine 87) interacts with L-aspartate. Carbamoyl phosphate-binding residues include arginine 109, histidine 137, and glutamine 140. Positions 170 and 224 each coordinate L-aspartate. The carbamoyl phosphate site is built by glycine 265 and proline 266.

It belongs to the aspartate/ornithine carbamoyltransferase superfamily. ATCase family. In terms of assembly, heterododecamer (2C3:3R2) of six catalytic PyrB chains organized as two trimers (C3), and six regulatory PyrI chains organized as three dimers (R2).

The catalysed reaction is carbamoyl phosphate + L-aspartate = N-carbamoyl-L-aspartate + phosphate + H(+). The protein operates within pyrimidine metabolism; UMP biosynthesis via de novo pathway; (S)-dihydroorotate from bicarbonate: step 2/3. Its function is as follows. Catalyzes the condensation of carbamoyl phosphate and aspartate to form carbamoyl aspartate and inorganic phosphate, the committed step in the de novo pyrimidine nucleotide biosynthesis pathway. The protein is Aspartate carbamoyltransferase catalytic subunit of Flavobacterium johnsoniae (strain ATCC 17061 / DSM 2064 / JCM 8514 / BCRC 14874 / CCUG 350202 / NBRC 14942 / NCIMB 11054 / UW101) (Cytophaga johnsonae).